The sequence spans 836 residues: Ethylene receptor 3 (836 aa).

The next 3 membrane-spanning stretches (helical) occupy residues 137–157 (LIAAAYFSIPLEILYFVAGLR), 166–186 (LVQFGAFIVLCGLTHLLTAFT), and 204–224 (LTALVSFLTAITLLTLIPQLL). The Cu cation site is built by C176 and H180. In terms of domain architecture, GAF spans 269 to 413 (DRHTVLYTTL…VVAGQVAVAL (145 aa)). Residues 416–452 (ATLLEESRAMRDRLAEQNRELLQARRDALMANEARQA) are a coiled coil. Residues 457–691 (MSQGMRRPIH…LVLRFQLQSP (235 aa)) form the Histidine kinase domain. The 117-residue stretch at 718–834 (LLIDDDDDIN…LKDELARILQ (117 aa)) folds into the Response regulatory domain.

Belongs to the ethylene receptor family. Requires Cu cation as cofactor.

Its subcellular location is the endoplasmic reticulum membrane. It carries out the reaction ATP + protein L-histidine = ADP + protein N-phospho-L-histidine.. In terms of biological role, ethylene receptor related to bacterial two-component regulators. Acts as a negative regulator of ethylene signaling. May delay the transition from the vegetative stage to the floral stage by up-regulating GI (GIGANTEA) and RCN1 and cause starch accumulation in stems by down-regulating the alpha-amylase AMY3D. The chain is Ethylene receptor 3 from Oryza sativa subsp. indica (Rice).